We begin with the raw amino-acid sequence, 476 residues long: Eukaryotic translation initiation factor 3 subunit L (476 aa).

The region spanning 257–452 (DAIRMFSHIL…DLDYALENDL (196 aa)) is the PCI domain.

Belongs to the eIF-3 subunit L family. As to quaternary structure, component of the eukaryotic translation initiation factor 3 (eIF-3) complex.

The protein localises to the cytoplasm. In terms of biological role, component of the eukaryotic translation initiation factor 3 (eIF-3) complex, which is involved in protein synthesis of a specialized repertoire of mRNAs and, together with other initiation factors, stimulates binding of mRNA and methionyl-tRNAi to the 40S ribosome. The eIF-3 complex specifically targets and initiates translation of a subset of mRNAs involved in cell proliferation. This chain is Eukaryotic translation initiation factor 3 subunit L, found in Aspergillus oryzae (strain ATCC 42149 / RIB 40) (Yellow koji mold).